The primary structure comprises 1131 residues: Homeobox-DDT domain protein RLT3 (1131 aa).

The homeobox; TALE-type DNA-binding region spans 2-56 (KRKSPLQVQALEGFYLEQMYPTPKEMEDLGKSLGLTLKEVRGWFKRRRSRGKGVK). Residues 239–251 (LQKRSTEKKRRSI) are compositionally biased toward basic residues. Residues 239 to 264 (LQKRSTEKKRRSIHREAELNKDETQR) are disordered. The span at 252–264 (HREAELNKDETQR) shows a compositional bias: basic and acidic residues. The DDT domain maps to 365 to 424 (PESVKKLFKVVHFLYTYSVTLDIGPFTLDEFTRAFHDKDSLLLGKIHLSLLKLLLLDVET). Residues 579–609 (EDPDKSQSDSDDSGSVDDESDDCSISSGDEI) form a disordered region. Residues 587–600 (DSDDSGSVDDESDD) are compositionally biased toward acidic residues.

It localises to the nucleus. Functionally, transcriptional regulator required for the maintenance of the plant vegetative phase. May prevent the early activation of the vegetative-to-reproductive transition by regulating key genes that contribute to flower timing. The polypeptide is Homeobox-DDT domain protein RLT3 (Arabidopsis thaliana (Mouse-ear cress)).